We begin with the raw amino-acid sequence, 45 residues long: MKMNYHLSTSSYTTSMLSCTVLDDDIRYEKLSWKLDEAEMQGLIM.

This is an uncharacterized protein from Saccharomyces cerevisiae (strain ATCC 204508 / S288c) (Baker's yeast).